The primary structure comprises 279 residues: Monoacylglycerol lipase (279 aa).

The active-site Nucleophile is the serine 110. Catalysis depends on charge relay system residues aspartate 226 and histidine 256.

This sequence belongs to the AB hydrolase superfamily. Monomer.

Its subcellular location is the secreted. It localises to the cell wall. It carries out the reaction a 1-acylglycerol + H2O = glycerol + a fatty acid + H(+). It catalyses the reaction Hydrolyzes glycerol monoesters of long-chain fatty acids.. The catalysed reaction is 1-butyrylglycerol + H2O = butanoate + glycerol + H(+). The enzyme catalyses 1-octanoylglycerol + H2O = octanoate + glycerol + H(+). It carries out the reaction 1-decanoylglycerol + H2O = decanoate + glycerol + H(+). It catalyses the reaction 1-dodecanoylglycerol + H2O = dodecanoate + glycerol + H(+). The catalysed reaction is 1-tetradecanoylglycerol + H2O = tetradecanoate + glycerol + H(+). The enzyme catalyses 1-(9Z-octadecenoyl)-glycerol + H2O = glycerol + (9Z)-octadecenoate + H(+). It carries out the reaction 2-(9Z-octadecenoyl)-glycerol + H2O = glycerol + (9Z)-octadecenoate + H(+). Inhibited by the serine esterase inhibitors PMSF (100%), E600 (80%) and THL (22%). Virtual screening identified a tautomer of ZINC13451138, known inhibitor for HIV-1 integrase, as a potential inhibitor. Functionally, involved in the hydrolysis of exogenous host lipids during chronic infection. Catalyzes the hydrolysis of both monoacylglycerols (MAG) and diacylglycerols (DAG), with a preference for MAG. It hydrolyzes 2-MAG, 1-3-MAG and MAG with short, medium and long chain fatty acids such as 1-monobutyroyl-rac-glycerol (MC4), 1-mono-octanoyl-rac-glycerol (MC8), 1-monodecanoyl-rac-glycerol (MC10), 1-monolauroyl-rac-glycerol (MC12), 1-monomyristoyl-rac-glycerol (MC14) and 1-mono-oleyl-rac-glycerol (MC18:1). Also able to hydrolyze DAG with short (DiC6) and medium (DiC10) fatty acid chains, but not with longest fatty acid chains. Can also hydrolyze vinyl laurate (VC12), vinyl butyrate (VC4) and vinyl propionate (VC3). Induces an inflammatory response and cell apoptosis in the host cells. Increases expression of IL-6, NF-kappaB, TLR-2, TLR-6, TNF-alpha, and MyD88 in mouse alveolar macrophage RAW264.7 cells. Persistent expression induces RAW264.7 cell apoptosis in vitro. This Mycobacterium tuberculosis (strain ATCC 25618 / H37Rv) protein is Monoacylglycerol lipase.